A 49-amino-acid polypeptide reads, in one-letter code: Omega-segestritoxin-Sf1a (49 aa).

4 disulfides stabilise this stretch: Cys3–Cys22, Cys10–Cys27, Cys21–Cys48, and Cys29–Cys46.

In terms of tissue distribution, expressed by the venom gland.

It is found in the secreted. In terms of biological role, potent and selective blocker of N-type voltage-gated calcium channels (Cav2.2/CACNA1B). Also blocks vertebrate Cav2.1/CACNA1A (P/Q-type) and Cav1.2/CACNA1C (L-type) channels at very high concentration (2 micromolar). The chain is Omega-segestritoxin-Sf1a from Segestria florentina (Tube-web spider).